A 361-amino-acid polypeptide reads, in one-letter code: Ribosomal RNA large subunit methyltransferase M (361 aa).

S-adenosyl-L-methionine contacts are provided by residues S187, 220–223, D239, D259, and D276; that span reads CPGG. K305 functions as the Proton acceptor in the catalytic mechanism.

This sequence belongs to the class I-like SAM-binding methyltransferase superfamily. RNA methyltransferase RlmE family. RlmM subfamily. In terms of assembly, monomer.

Its subcellular location is the cytoplasm. The catalysed reaction is cytidine(2498) in 23S rRNA + S-adenosyl-L-methionine = 2'-O-methylcytidine(2498) in 23S rRNA + S-adenosyl-L-homocysteine + H(+). Catalyzes the 2'-O-methylation at nucleotide C2498 in 23S rRNA. This is Ribosomal RNA large subunit methyltransferase M from Shewanella sp. (strain MR-4).